The chain runs to 492 residues: MKIDMRNISKSFGTNKVLEKIDLELQSGQIHALMGENGAGKSTLMNILTGLFPASTGTIYIDGEERTFSNPQEAEEFGISFIHQEMNTWPEMTVLENLFLGREIKTTFGLLNQKLMRQKALEAFKRLGVTIPLDIPIGNLSVGQQQMIEIAKSLLNQLSILVMDEPTAALTDRETENLFRVIRSLKQEGVGIVYISHRMEEIFKITDFVTVMRDGVIVDTKETSLTNSDELVKKMVGRKLEDYYPEKHSEIGPVAFEVSNLCGDNFEDVSFYVRKGEILGFSGLMGAGRTEVMRTIFGIDKKKSGKVKIDNQEITITSPSQAIKQGIGFLTENRKDEGLILDFNIKDNMTLPSTKDFSKHGFFDEKTRTTFVQQLINRLYIKSGRPDLEVGNLSGGNQQKVVLAKWIGIAPKVLILDEPTRGVDVGAKREIYQLMNELADRGVPIVMVSSDLPEILGVSDRIMVMHEGRISGELSRKEADQEKVMQLATGGK.

2 consecutive ABC transporter domains span residues 3–239 (IDMR…VGRK) and 238–492 (RKLE…TGGK). An ATP-binding site is contributed by 35 to 42 (GENGAGKS).

The protein belongs to the ABC transporter superfamily. Ribose importer (TC 3.A.1.2.1) family. In terms of assembly, the complex is composed of an ATP-binding protein (RbsA), two transmembrane proteins (RbsC) and a solute-binding protein (RbsB).

It is found in the cell membrane. The enzyme catalyses D-ribose(out) + ATP + H2O = D-ribose(in) + ADP + phosphate + H(+). Part of the ABC transporter complex RbsABC involved in ribose import. Responsible for energy coupling to the transport system. The protein is Ribose import ATP-binding protein RbsA of Streptococcus agalactiae serotype III (strain NEM316).